The primary structure comprises 255 residues: MWIGIISLFPEMFKAITDFGVTGRAVKQNLLQVQCWNPRDFTHDKHKTVDDRPYGGGPGMLMMVQPLRDAIREAKATACKEDGVEAKVIYLSPQGRKLDQAGVQTLATNQKLILVCGRYEGIDERLIQTEIDEEWSIGDYVLTGGELPAMTLIDAVARFIPGVLGKQTSALEDSFAEGLLDCPHYTRPEVLDGLPVPQVLMSGHHEQIRKWRLEQSLKRTWLRRPELLDSLALTDEQRVLLNNIKKRHKSVNSRT.

Residues Gly117 and Ile137–Leu142 each bind S-adenosyl-L-methionine.

It belongs to the RNA methyltransferase TrmD family. Homodimer.

The protein resides in the cytoplasm. It catalyses the reaction guanosine(37) in tRNA + S-adenosyl-L-methionine = N(1)-methylguanosine(37) in tRNA + S-adenosyl-L-homocysteine + H(+). Its function is as follows. Specifically methylates guanosine-37 in various tRNAs. In Glaesserella parasuis serovar 5 (strain SH0165) (Haemophilus parasuis), this protein is tRNA (guanine-N(1)-)-methyltransferase.